The following is a 316-amino-acid chain: ATP synthase gamma chain (316 aa).

The protein belongs to the ATPase gamma chain family. F-type ATPases have 2 components, CF(1) - the catalytic core - and CF(0) - the membrane proton channel. CF(1) has five subunits: alpha(3), beta(3), gamma(1), delta(1), epsilon(1). CF(0) has three main subunits: a, b and c.

Its subcellular location is the cellular thylakoid membrane. Its function is as follows. Produces ATP from ADP in the presence of a proton gradient across the membrane. The gamma chain is believed to be important in regulating ATPase activity and the flow of protons through the CF(0) complex. The sequence is that of ATP synthase gamma chain from Prochlorococcus marinus (strain MIT 9215).